We begin with the raw amino-acid sequence, 329 residues long: Carbonic anhydrase (329 aa).

Positions 1–108 are chloroplast transit peptide-like; it reads MSTASAFAIN…AAARIDQITA (108 aa).

It belongs to the beta-class carbonic anhydrase family. Homohexamer.

The protein resides in the cytoplasm. The catalysed reaction is hydrogencarbonate + H(+) = CO2 + H2O. In terms of biological role, reversible hydration of carbon dioxide. The chain is Carbonic anhydrase from Flaveria pringlei.